A 192-amino-acid polypeptide reads, in one-letter code: Pyridoxal 5'-phosphate synthase subunit PdxT (192 aa).

47-49 lines the L-glutamine pocket; sequence GES. Cysteine 79 acts as the Nucleophile in catalysis. L-glutamine is bound by residues arginine 106 and 134–135; that span reads IR. Active-site charge relay system residues include histidine 170 and glutamate 172.

The protein belongs to the glutaminase PdxT/SNO family. As to quaternary structure, in the presence of PdxS, forms a dodecamer of heterodimers. Only shows activity in the heterodimer.

The catalysed reaction is aldehydo-D-ribose 5-phosphate + D-glyceraldehyde 3-phosphate + L-glutamine = pyridoxal 5'-phosphate + L-glutamate + phosphate + 3 H2O + H(+). It carries out the reaction L-glutamine + H2O = L-glutamate + NH4(+). It participates in cofactor biosynthesis; pyridoxal 5'-phosphate biosynthesis. Its function is as follows. Catalyzes the hydrolysis of glutamine to glutamate and ammonia as part of the biosynthesis of pyridoxal 5'-phosphate. The resulting ammonia molecule is channeled to the active site of PdxS. The protein is Pyridoxal 5'-phosphate synthase subunit PdxT of Anoxybacillus flavithermus (strain DSM 21510 / WK1).